A 270-amino-acid polypeptide reads, in one-letter code: D-aminoacyl-tRNA deacylase (270 aa).

The protein belongs to the DtdA deacylase family. Monomer. It depends on Zn(2+) as a cofactor.

It catalyses the reaction a D-aminoacyl-tRNA + H2O = a tRNA + a D-alpha-amino acid + H(+). It carries out the reaction glycyl-tRNA(Ala) + H2O = tRNA(Ala) + glycine + H(+). D-aminoacyl-tRNA deacylase with broad substrate specificity. By recycling D-aminoacyl-tRNA to D-amino acids and free tRNA molecules, this enzyme counteracts the toxicity associated with the formation of D-aminoacyl-tRNA entities in vivo. The protein is D-aminoacyl-tRNA deacylase of Pyrococcus furiosus (strain ATCC 43587 / DSM 3638 / JCM 8422 / Vc1).